Here is a 389-residue protein sequence, read N- to C-terminus: NADH-dependent butanol dehydrogenase A (389 aa).

It belongs to the iron-containing alcohol dehydrogenase family. Homodimer.

It participates in alcohol metabolism; butanol biosynthesis. In Clostridium acetobutylicum (strain ATCC 824 / DSM 792 / JCM 1419 / IAM 19013 / LMG 5710 / NBRC 13948 / NRRL B-527 / VKM B-1787 / 2291 / W), this protein is NADH-dependent butanol dehydrogenase A (bdhA).